A 247-amino-acid chain; its full sequence is ATP synthase subunit a, chloroplastic (247 aa).

The next 5 membrane-spanning stretches (helical) occupy residues 38–58, 95–115, 134–154, 199–219, and 220–240; these read QVLITSWVVIAILLGSAIIAV, VPFIGTMFLFIFVSNWSGALL, INTTVALALLTSVAYFYAGLS, LVVVVLVSLVPLVVPIPVMFL, and GLFTSGIQALIFATLAAAYIG.

It belongs to the ATPase A chain family. In terms of assembly, F-type ATPases have 2 components, CF(1) - the catalytic core - and CF(0) - the membrane proton channel. CF(1) has five subunits: alpha(3), beta(3), gamma(1), delta(1), epsilon(1). CF(0) has four main subunits: a, b, b' and c.

Its subcellular location is the plastid. It localises to the chloroplast thylakoid membrane. In terms of biological role, key component of the proton channel; it plays a direct role in the translocation of protons across the membrane. This Cucumis sativus (Cucumber) protein is ATP synthase subunit a, chloroplastic.